Reading from the N-terminus, the 524-residue chain is Lysine--tRNA ligase (524 aa).

Mg(2+)-binding residues include Glu-433 and Glu-440.

Belongs to the class-II aminoacyl-tRNA synthetase family. In terms of assembly, homodimer. It depends on Mg(2+) as a cofactor.

It is found in the cytoplasm. It catalyses the reaction tRNA(Lys) + L-lysine + ATP = L-lysyl-tRNA(Lys) + AMP + diphosphate. In Colwellia psychrerythraea (strain 34H / ATCC BAA-681) (Vibrio psychroerythus), this protein is Lysine--tRNA ligase.